Here is an 814-residue protein sequence, read N- to C-terminus: S-layer protein sap (814 aa).

An N-terminal signal peptide occupies residues 1-29; that stretch reads MAKTNSYKKVIAGTMTAAMVAGVVSPVAA. 3 consecutive SLH domains span residues 30–93, 94–150, and 152–214; these read AGKT…DAKP, SFAD…KVNG, and PATK…AAKV. One can recognise a BIG2 domain in the interval 403–479; the sequence is FTSKDFKQNN…TVKDSKGKEL (77 aa).

Probably glycosylated.

It is found in the secreted. It localises to the cell wall. Its subcellular location is the S-layer. In terms of biological role, the S-layer is a paracrystalline mono-layered assembly of proteins which coat the surface of bacteria. In Bacillus anthracis, this protein is S-layer protein sap (sap).